An 833-amino-acid chain; its full sequence is MWVAYSPIEGLTTEHSRLAEKYSLYLVKSTPYDIPLPVRPSGVPVLFVPGNAGSYRQIRSISDTCRELNEQYGGSEIDFFALDFNEAYSALHGRTLLDQAEYLNDAINYILQMYRDNGKDVSSVMLLGHSMGGVVSRLAISLDNYKPGTVTTIFTLASPHLVPPATFDGDIQKVYNRMNDFWRSNYADSDNNSLSDMTVLSIAGGKRDTMVPSDYISLDSVVPSSHGLSTFSNSINRVWTGIDHDAMMWCHQLRRQIAIALMNVIDRDVNGRMEVFRKVFSGTQTLSDAEEDFEDVEVTPVKHGLHQKLESGWYYGENVQVMTTHTVNQESAFESYEMSSGSLLRAFECRSKSGSSFKGCRKIFPLLVPGSNDAVIAFAETEHYLLLDVSSSSDWISIDQVSQKSASFDFVTGATISTSNTISTDISFPKLTSGLVSYKVSVSKGVQLVRQYVQQNSSRVYDSKYLVPHNGVVDVSFHGDVPFVPYFQSSPLHLQVFGGGHVTIRVDWIGSLGNLFMRYRILFISLPSAILYAIFLVQFHAGTARFLSLRQSTSIFINRYLLTSCLAGSGIAYLTGLSQVRDFLHLIQIPITKTFAVDPSYTKNDLFLGLSGVSGTVLAPIFTVFSTGMVVLITELVMGLTSLLSFCFKSTTTAQSESESGDPISDLLHKRTVFVAVISVLVLLFFPYQLAFTLATVALLVMTAYFKSNKAPQEQSFNNYISTICVLMTWTCIINAPVLAVWIQGIVVQRSMTFSSHHNLVSILPTLLFVENLSFRRIPSGSSITSLLLAYTSLHCLFYGMMQAFMIHHGFNLLATWLLCMSYKKVFFKSKHE.

Ser130 is an active-site residue. Residues Asn191 and Asn456 are each glycosylated (N-linked (GlcNAc...) asparagine). 5 consecutive transmembrane segments (helical) span residues 521–541 (ILFI…QFHA), 560–580 (YLLT…LSQV), 617–637 (VLAP…TELV), 672–692 (TVFV…QLAF), and 723–743 (TICV…AVWI). An N-linked (GlcNAc...) asparagine glycan is attached at Asn772. A helical transmembrane segment spans residues 787–807 (LLLAYTSLHCLFYGMMQAFMI).

It belongs to the GPI inositol-deacylase family.

It localises to the endoplasmic reticulum membrane. Functionally, involved in inositol deacylation of GPI-anchored proteins which plays important roles in the quality control and ER-associated degradation of GPI-anchored proteins. This Yarrowia lipolytica (strain CLIB 122 / E 150) (Yeast) protein is Putative GPI inositol-deacylase C (BST1C).